A 510-amino-acid chain; its full sequence is UDP-N-acetylmuramoylalanine--D-glutamate ligase (510 aa).

An ATP-binding site is contributed by 138–144 (GTNGKTT). Residues 294-316 (FDEPAPAPRRKKDAPPPTRAGGR) are disordered.

This sequence belongs to the MurCDEF family.

Its subcellular location is the cytoplasm. It catalyses the reaction UDP-N-acetyl-alpha-D-muramoyl-L-alanine + D-glutamate + ATP = UDP-N-acetyl-alpha-D-muramoyl-L-alanyl-D-glutamate + ADP + phosphate + H(+). Its pathway is cell wall biogenesis; peptidoglycan biosynthesis. In terms of biological role, cell wall formation. Catalyzes the addition of glutamate to the nucleotide precursor UDP-N-acetylmuramoyl-L-alanine (UMA). In Bordetella bronchiseptica (strain ATCC BAA-588 / NCTC 13252 / RB50) (Alcaligenes bronchisepticus), this protein is UDP-N-acetylmuramoylalanine--D-glutamate ligase.